The primary structure comprises 258 residues: Tryptophan synthase alpha chain (258 aa).

Catalysis depends on proton acceptor residues E52 and D63.

Belongs to the TrpA family. As to quaternary structure, tetramer of two alpha and two beta chains.

The catalysed reaction is (1S,2R)-1-C-(indol-3-yl)glycerol 3-phosphate + L-serine = D-glyceraldehyde 3-phosphate + L-tryptophan + H2O. Its pathway is amino-acid biosynthesis; L-tryptophan biosynthesis; L-tryptophan from chorismate: step 5/5. Functionally, the alpha subunit is responsible for the aldol cleavage of indoleglycerol phosphate to indole and glyceraldehyde 3-phosphate. The protein is Tryptophan synthase alpha chain of Streptococcus pneumoniae serotype 4 (strain ATCC BAA-334 / TIGR4).